The following is a 133-amino-acid chain: DNA-directed RNA polymerase subunit omega (133 aa).

Belongs to the RNA polymerase subunit omega family. As to quaternary structure, the RNAP catalytic core consists of 2 alpha, 1 beta, 1 beta' and 1 omega subunit. When a sigma factor is associated with the core the holoenzyme is formed, which can initiate transcription.

It carries out the reaction RNA(n) + a ribonucleoside 5'-triphosphate = RNA(n+1) + diphosphate. In terms of biological role, promotes RNA polymerase assembly. Latches the N- and C-terminal regions of the beta' subunit thereby facilitating its interaction with the beta and alpha subunits. This chain is DNA-directed RNA polymerase subunit omega, found in Mesorhizobium japonicum (strain LMG 29417 / CECT 9101 / MAFF 303099) (Mesorhizobium loti (strain MAFF 303099)).